Here is a 926-residue protein sequence, read N- to C-terminus: Alpha-aminoadipic semialdehyde synthase, mitochondrial (926 aa).

Residues 1-27 (MLRAQRPRLARLRACLSRGLHHKPVMA) constitute a mitochondrion transit peptide. Residues 28–455 (LRREDVNAWE…DAVITSNGLL (428 aa)) form a lysine-ketoglutarate reductase region. N6-acetyllysine occurs at positions 48, 52, and 56. Lys93 is subject to N6-acetyllysine; alternate. Residue Lys93 is modified to N6-succinyllysine; alternate. Position 128 is an N6-acetyllysine (Lys128). Residue Lys138 is modified to N6-acetyllysine; alternate. Lys138 carries the N6-succinyllysine; alternate modification. Residue Lys274 is modified to N6-succinyllysine. Residue Lys286 is modified to N6-acetyllysine; alternate. Residue Lys286 is modified to N6-succinyllysine; alternate. Lys333 bears the N6-succinyllysine mark. An N6-acetyllysine; alternate modification is found at Lys458. Lys458 carries the post-translational modification N6-succinyllysine; alternate. The tract at residues 477–926 (MSTKKKVLVL…VFNTQSTIKL (450 aa)) is saccharopine dehydrogenase. Residues Ser488, Asp512, and Gln516 each coordinate NAD(+). N6-acetyllysine; alternate is present on residues Lys523 and Lys535. Residues Lys523 and Lys535 each carry the N6-succinyllysine; alternate modification. Residues Leu554, Ala576, and Ser577 each contribute to the NAD(+) site. 577-578 (SY) is a binding site for L-saccharopine. Lys584 bears the N6-acetyllysine; alternate mark. Position 584 is an N6-succinyllysine; alternate (Lys584). NAD(+) contacts are provided by Leu603, Asp604, and Pro605. An L-saccharopine-binding site is contributed by Asp604. Arg703 provides a ligand contact to L-saccharopine. N6-acetyllysine is present on Lys707. 724-726 (TLR) serves as a coordination point for L-saccharopine. At Lys732 the chain carries N6-succinyllysine. Lys739 is subject to N6-acetyllysine. Lys761 bears the N6-acetyllysine; alternate mark. The residue at position 761 (Lys761) is an N6-succinyllysine; alternate. Lys778 and Lys780 each carry N6-acetyllysine.

This sequence in the N-terminal section; belongs to the AlaDH/PNT family. It in the C-terminal section; belongs to the saccharopine dehydrogenase family. In terms of assembly, homotetramer. In terms of tissue distribution, highly expressed in kidney and liver, very low expression is seen in heart, brain, spleen, lung, skeletal muscle and testis.

It is found in the mitochondrion. The catalysed reaction is L-saccharopine + NADP(+) + H2O = L-lysine + 2-oxoglutarate + NADPH + H(+). The enzyme catalyses L-saccharopine + NAD(+) + H2O = (S)-2-amino-6-oxohexanoate + L-glutamate + NADH + H(+). Its pathway is amino-acid degradation; L-lysine degradation via saccharopine pathway; glutaryl-CoA from L-lysine: step 1/6. It functions in the pathway amino-acid degradation; L-lysine degradation via saccharopine pathway; glutaryl-CoA from L-lysine: step 2/6. Its function is as follows. Bifunctional enzyme that catalyzes the first two steps in lysine degradation. This is Alpha-aminoadipic semialdehyde synthase, mitochondrial from Mus musculus (Mouse).